The sequence spans 94 residues: Large ribosomal subunit protein bL25 (94 aa).

It belongs to the bacterial ribosomal protein bL25 family. As to quaternary structure, part of the 50S ribosomal subunit; part of the 5S rRNA/L5/L18/L25 subcomplex. Contacts the 5S rRNA. Binds to the 5S rRNA independently of L5 and L18.

In terms of biological role, this is one of the proteins that binds to the 5S RNA in the ribosome where it forms part of the central protuberance. The chain is Large ribosomal subunit protein bL25 from Serratia proteamaculans (strain 568).